The following is a 237-amino-acid chain: Protein GrpE (237 aa).

The tract at residues 1–65 is disordered; it reads MTDSYKLPDN…DAREDDRDPT (65 aa). Residues 55–65 are compositionally biased toward basic and acidic residues; sequence VDAREDDRDPT.

This sequence belongs to the GrpE family. As to quaternary structure, homodimer.

It is found in the cytoplasm. Participates actively in the response to hyperosmotic and heat shock by preventing the aggregation of stress-denatured proteins, in association with DnaK and GrpE. It is the nucleotide exchange factor for DnaK and may function as a thermosensor. Unfolded proteins bind initially to DnaJ; upon interaction with the DnaJ-bound protein, DnaK hydrolyzes its bound ATP, resulting in the formation of a stable complex. GrpE releases ADP from DnaK; ATP binding to DnaK triggers the release of the substrate protein, thus completing the reaction cycle. Several rounds of ATP-dependent interactions between DnaJ, DnaK and GrpE are required for fully efficient folding. The polypeptide is Protein GrpE (Corynebacterium efficiens (strain DSM 44549 / YS-314 / AJ 12310 / JCM 11189 / NBRC 100395)).